The chain runs to 649 residues: UvrABC system protein C (649 aa).

One can recognise a GIY-YIG domain in the interval 12–91 (SSPGVYLMKS…IKQHRPKYNI (80 aa)). One can recognise a UVR domain in the interval 201-236 (NEVARLYRSKMNLASEQMRYEDAARYRDLLRAIEVT). The tract at residues 603-649 (RLHGGPLPNPPPPGEGAMGDGSIPSPRNGVMDDSIPSPSGRGWPKAG) is disordered.

This sequence belongs to the UvrC family. As to quaternary structure, interacts with UvrB in an incision complex.

The protein resides in the cytoplasm. Its function is as follows. The UvrABC repair system catalyzes the recognition and processing of DNA lesions. UvrC both incises the 5' and 3' sides of the lesion. The N-terminal half is responsible for the 3' incision and the C-terminal half is responsible for the 5' incision. This Geobacter sp. (strain M21) protein is UvrABC system protein C.